We begin with the raw amino-acid sequence, 372 residues long: Cytochrome b (372 aa).

4 helical membrane-spanning segments follow: residues phenylalanine 25–isoleucine 45, tryptophan 69–isoleucine 90, tryptophan 105–leucine 125, and phenylalanine 170–isoleucine 190. Heme b contacts are provided by histidine 75 and histidine 89. Residues histidine 174 and histidine 188 each coordinate heme b. Position 193 (histidine 193) interacts with a ubiquinone. The next 4 helical transmembrane spans lie at tyrosine 218–alanine 238, leucine 280–histidine 300, leucine 312–threonine 332, and phenylalanine 339–proline 358.

Belongs to the cytochrome b family. In terms of assembly, the cytochrome bc1 complex contains 3 respiratory subunits (MT-CYB, CYC1 and UQCRFS1), 2 core proteins (UQCRC1 and UQCRC2) and probably 6 low-molecular weight proteins. Heme b is required as a cofactor.

It is found in the mitochondrion inner membrane. Its function is as follows. Component of the ubiquinol-cytochrome c reductase complex (complex III or cytochrome b-c1 complex) that is part of the mitochondrial respiratory chain. The b-c1 complex mediates electron transfer from ubiquinol to cytochrome c. Contributes to the generation of a proton gradient across the mitochondrial membrane that is then used for ATP synthesis. The protein is Cytochrome b (MT-CYB) of Acanthophis antarcticus (Common death adder).